A 230-amino-acid polypeptide reads, in one-letter code: 5'-methylthioadenosine/S-adenosylhomocysteine nucleosidase (230 aa).

Glutamate 12 serves as the catalytic Proton acceptor. Substrate is bound by residues glycine 78, methionine 153, and 174–175; that span reads ME. The active-site Proton donor is aspartate 198.

Belongs to the PNP/UDP phosphorylase family. MtnN subfamily.

The enzyme catalyses S-adenosyl-L-homocysteine + H2O = S-(5-deoxy-D-ribos-5-yl)-L-homocysteine + adenine. The catalysed reaction is S-methyl-5'-thioadenosine + H2O = 5-(methylsulfanyl)-D-ribose + adenine. It carries out the reaction 5'-deoxyadenosine + H2O = 5-deoxy-D-ribose + adenine. The protein operates within amino-acid biosynthesis; L-methionine biosynthesis via salvage pathway; S-methyl-5-thio-alpha-D-ribose 1-phosphate from S-methyl-5'-thioadenosine (hydrolase route): step 1/2. Functionally, catalyzes the irreversible cleavage of the glycosidic bond in both 5'-methylthioadenosine (MTA) and S-adenosylhomocysteine (SAH/AdoHcy) to adenine and the corresponding thioribose, 5'-methylthioribose and S-ribosylhomocysteine, respectively. Also cleaves 5'-deoxyadenosine, a toxic by-product of radical S-adenosylmethionine (SAM) enzymes, into 5-deoxyribose and adenine. This chain is 5'-methylthioadenosine/S-adenosylhomocysteine nucleosidase, found in Lysinibacillus sphaericus (strain C3-41).